The primary structure comprises 717 residues: Ubinuclein-2 (717 aa).

Disordered stretches follow at residues 114 to 136 (KDGS…TEDS), 166 to 308 (LERI…SAKS), and 620 to 717 (ADSS…NLPS). The segment covering 118 to 136 (DGEELDGAPDDDDYDTEDS) has biased composition (acidic residues). 2 stretches are compositionally biased toward polar residues: residues 214 to 246 (QSAS…NGND) and 285 to 308 (SSKS…SAKS). Over residues 623–632 (SFERSKQQHE) the composition is skewed to basic and acidic residues. A Nuclear localization signal motif is present at residues 634-641 (LKRTSSLS). Residues 653-665 (KTEPALEETHLPA) are compositionally biased toward basic and acidic residues. A compositionally biased stretch (basic residues) spans 675–705 (RQTHLKSKTHKQVQVHPQSKAHKQAQVHPKA). A compositionally biased stretch (polar residues) spans 706-717 (KTQTPPDLNLPS).

The protein belongs to the ubinuclein family. Component of the HIRA complex made of UBN1, UBN2, ASF1A, CABIN1 and HIRA. Interacts with HIRA.

It localises to the nucleus. Its subcellular location is the nucleolus. Its function is as follows. May be required for replication-independent chromatin assembly. The polypeptide is Ubinuclein-2 (Arabidopsis thaliana (Mouse-ear cress)).